Here is a 318-residue protein sequence, read N- to C-terminus: MRHLLSTRDLSRDEAVRILDVAEDMADVGTREIKKTPALRGRTVVNLFFEDSTRTRISFEAAAKRLSADVINFSAKGSSVSKGESLKDTAQTLQAMGADGVVVRHPSSGAPHTLAGSGWIDAGIVNAGDGTHEHPTQALLDAFTIRRRLHGSAARGKGLDGTRVVIVGDVLHSRVARSNAWLLTTLGAEVTLVAPPTLVPVGVGSWPVTVRYDLDAALRDGAPDAVMMLRIQAERMRAAFFPNPREYARIWGLDDARLALLGPDTIVMHPGPMNRGLEISAAAADSERSTVREQVANGVSVRMAVLYLLLSGDGKADR.

Residues arginine 54 and threonine 55 each coordinate carbamoyl phosphate. L-aspartate is bound at residue lysine 82. The carbamoyl phosphate site is built by arginine 104, histidine 134, and glutamine 137. Residues arginine 174 and arginine 230 each coordinate L-aspartate. Positions 271 and 272 each coordinate carbamoyl phosphate.

It belongs to the aspartate/ornithine carbamoyltransferase superfamily. ATCase family. Heterododecamer (2C3:3R2) of six catalytic PyrB chains organized as two trimers (C3), and six regulatory PyrI chains organized as three dimers (R2).

It carries out the reaction carbamoyl phosphate + L-aspartate = N-carbamoyl-L-aspartate + phosphate + H(+). It participates in pyrimidine metabolism; UMP biosynthesis via de novo pathway; (S)-dihydroorotate from bicarbonate: step 2/3. Catalyzes the condensation of carbamoyl phosphate and aspartate to form carbamoyl aspartate and inorganic phosphate, the committed step in the de novo pyrimidine nucleotide biosynthesis pathway. The protein is Aspartate carbamoyltransferase catalytic subunit of Clavibacter sepedonicus (Clavibacter michiganensis subsp. sepedonicus).